The following is a 428-amino-acid chain: MTVHVQPCAAPAEDPVSRAVRTESGQREVFCGLTGIVWLHRKIQDAFFLVVGSRTCAHLIQSAAGVMIFAEPRFGTAIMEEKDLAGLTDANDELDRIVTQLLTRRPDIKLLFLVGSCPSEVIKLDLSRAALRLSQRFSPGVRILNYSGSGIETTFTQGEDSCLASLVPALPAAQDETSSLLVIGSLADVVEDQFMRMFDALGIGPVQFFPPRKSTALPSVGPNTKILMAQPFLPDTVRALQERGAKRLAAPFPLGVEGTTGWLRAAADAFGIDAATFDRVTEPNRVRAERALGAYKAELGGRRIFFFPDSQLEIPLARFLARELSMQLVEVGTPYLHREHLAEELKLLPAGVALTEGQDVDLQLDRCRLARPDIAVCGLGLANPLEAEGITTKWSIELVFTPIQGYEQAADLAELFARPLVRRAKLVA.

3 residues coordinate [4Fe-4S] cluster: Cys31, Cys56, and Cys117.

This sequence belongs to the BchN/ChlN family. As to quaternary structure, protochlorophyllide reductase is composed of three subunits; BchL, BchN and BchB. Forms a heterotetramer of two BchB and two BchN subunits. It depends on [4Fe-4S] cluster as a cofactor.

The enzyme catalyses chlorophyllide a + oxidized 2[4Fe-4S]-[ferredoxin] + 2 ADP + 2 phosphate = protochlorophyllide a + reduced 2[4Fe-4S]-[ferredoxin] + 2 ATP + 2 H2O. Its pathway is porphyrin-containing compound metabolism; bacteriochlorophyll biosynthesis (light-independent). In terms of biological role, component of the dark-operative protochlorophyllide reductase (DPOR) that uses Mg-ATP and reduced ferredoxin to reduce ring D of protochlorophyllide (Pchlide) to form chlorophyllide a (Chlide). This reaction is light-independent. The NB-protein (BchN-BchB) is the catalytic component of the complex. The polypeptide is Light-independent protochlorophyllide reductase subunit N (Rhodopseudomonas palustris (strain HaA2)).